A 391-amino-acid chain; its full sequence is MSRTLQLAEQLISRPSVTPDDAGCQQILGERLARLGFTLETIESGPADFRVTNLWAVRRPAGTAPTKTLVFAGHTDVVPTGPVEQWTSHPFTPTHRGGKLYGRGACDMKTSVAAFVVSIEEFLAATPDPRLTLALLLTSDEEGPGVDGTVIVCNALAARGETIDYCIVGEPTAVERCGDMIKNGRRGTMSGKLTVHGVQGHIAYPHLAKNPVHAVAPALAELVAINAAGGWDAGNAYFQPTSWQISNFHAGTGASNVIPGSAVIDFNFRFSTESTPESLQKRVHAVLDAHGVDCTLAWTIGGLPFLTTPGELVSAVQAAIADETGIATELSTSGGTSDARFIAKICKQVVELGPVNASIHKIDEHIDVAEIETLKNIYKRTLERLEASLIQ.

Position 74 (His74) interacts with Zn(2+). The active site involves Asp76. Asp107 serves as a coordination point for Zn(2+). Residue Glu141 is the Proton acceptor of the active site. Positions 142, 170, and 360 each coordinate Zn(2+).

Belongs to the peptidase M20A family. DapE subfamily. In terms of assembly, homodimer. Zn(2+) is required as a cofactor. It depends on Co(2+) as a cofactor.

It catalyses the reaction N-succinyl-(2S,6S)-2,6-diaminopimelate + H2O = (2S,6S)-2,6-diaminopimelate + succinate. It participates in amino-acid biosynthesis; L-lysine biosynthesis via DAP pathway; LL-2,6-diaminopimelate from (S)-tetrahydrodipicolinate (succinylase route): step 3/3. Functionally, catalyzes the hydrolysis of N-succinyl-L,L-diaminopimelic acid (SDAP), forming succinate and LL-2,6-diaminopimelate (DAP), an intermediate involved in the bacterial biosynthesis of lysine and meso-diaminopimelic acid, an essential component of bacterial cell walls. This is Succinyl-diaminopimelate desuccinylase from Variovorax paradoxus (strain S110).